Reading from the N-terminus, the 89-residue chain is Small ribosomal subunit protein uS17 (89 aa).

The protein belongs to the universal ribosomal protein uS17 family. In terms of assembly, part of the 30S ribosomal subunit.

One of the primary rRNA binding proteins, it binds specifically to the 5'-end of 16S ribosomal RNA. The polypeptide is Small ribosomal subunit protein uS17 (Variovorax paradoxus (strain S110)).